Reading from the N-terminus, the 179-residue chain is Probable F-box protein At3g25550 (179 aa).

An F-box domain is found at 19-55 (IPNDDVLEEIIVRLPVKTLTRFQTVSKHWRHTIKSRN).

This Arabidopsis thaliana (Mouse-ear cress) protein is Probable F-box protein At3g25550.